A 219-amino-acid chain; its full sequence is NADH-ubiquinone oxidoreductase 23 kDa subunit, mitochondrial (219 aa).

2 consecutive 4Fe-4S ferredoxin-type domains span residues 111 to 140 (RRYP…IEAE) and 150 to 179 (TRYD…ESPN). [4Fe-4S] cluster contacts are provided by cysteine 120, cysteine 123, cysteine 126, cysteine 130, cysteine 159, cysteine 162, cysteine 165, and cysteine 169.

Belongs to the complex I 23 kDa subunit family. As to quaternary structure, complex I is composed of about 40 different subunits. [4Fe-4S] cluster serves as cofactor.

It localises to the mitochondrion. It carries out the reaction a ubiquinone + NADH + 5 H(+)(in) = a ubiquinol + NAD(+) + 4 H(+)(out). Core subunit of the mitochondrial membrane respiratory chain NADH dehydrogenase (Complex I) that is believed to belong to the minimal assembly required for catalysis. Complex I functions in the transfer of electrons from NADH to the respiratory chain. The immediate electron acceptor for the enzyme is believed to be ubiquinone. May donate electrons to ubiquinone. This Neurospora crassa (strain ATCC 24698 / 74-OR23-1A / CBS 708.71 / DSM 1257 / FGSC 987) protein is NADH-ubiquinone oxidoreductase 23 kDa subunit, mitochondrial (nuo21.3c).